Here is a 436-residue protein sequence, read N- to C-terminus: GTPase Obg (436 aa).

One can recognise an Obg domain in the interval 2–160 (SMFLDTAKIK…RELQLELKIL (159 aa)). One can recognise an OBG-type G domain in the interval 161–338 (ADVGLVGFPS…LLDATAELLD (178 aa)). Residues 167–174 (GFPSVGKS), 192–196 (FTTIV), 214–217 (DLPG), 284–287 (NKMD), and 319–321 (SGL) contribute to the GTP site. Residues Ser174 and Thr194 each contribute to the Mg(2+) site. Positions 358–436 (GFDEEEKAFE…IGKFEFEFVD (79 aa)) constitute an OCT domain.

Belongs to the TRAFAC class OBG-HflX-like GTPase superfamily. OBG GTPase family. Monomer. Mg(2+) is required as a cofactor.

It is found in the cytoplasm. In terms of biological role, an essential GTPase which binds GTP, GDP and possibly (p)ppGpp with moderate affinity, with high nucleotide exchange rates and a fairly low GTP hydrolysis rate. Plays a role in control of the cell cycle, stress response, ribosome biogenesis and in those bacteria that undergo differentiation, in morphogenesis control. This chain is GTPase Obg, found in Streptococcus pneumoniae (strain CGSP14).